Here is a 333-residue protein sequence, read N- to C-terminus: D-alanine--D-alanine ligase (333 aa).

One can recognise an ATP-grasp domain in the interval 124-329; the sequence is KMWFSALGIP…FTEYLYSNIK (206 aa). 154–209 contributes to the ATP binding site; sequence ALETWGSVFIKAASQGSSVGCYRVDSIDELASSLKEAFSYSPYVVVEKTIHARELE. The Mg(2+) site is built by D283, E296, and N298.

The protein belongs to the D-alanine--D-alanine ligase family. It depends on Mg(2+) as a cofactor. Requires Mn(2+) as cofactor.

The protein resides in the cytoplasm. The catalysed reaction is 2 D-alanine + ATP = D-alanyl-D-alanine + ADP + phosphate + H(+). The protein operates within cell wall biogenesis; peptidoglycan biosynthesis. In terms of biological role, cell wall formation. The sequence is that of D-alanine--D-alanine ligase from Shewanella sediminis (strain HAW-EB3).